Reading from the N-terminus, the 399-residue chain is DNA primase DnaG (399 aa).

The Toprim domain maps to 182–268 (DAIIVVEGRA…EVEDLTQKEI (87 aa)). 3 residues coordinate Mg(2+): E188, D230, and D232.

The protein belongs to the archaeal DnaG primase family. Forms a ternary complex with MCM helicase and DNA. Component of the archaeal exosome complex. Requires Mg(2+) as cofactor.

It catalyses the reaction ssDNA + n NTP = ssDNA/pppN(pN)n-1 hybrid + (n-1) diphosphate.. RNA polymerase that catalyzes the synthesis of short RNA molecules used as primers for DNA polymerase during DNA replication. Also part of the exosome, which is a complex involved in RNA degradation. Acts as a poly(A)-binding protein that enhances the interaction between heteromeric, adenine-rich transcripts and the exosome. The sequence is that of DNA primase DnaG from Archaeoglobus fulgidus (strain ATCC 49558 / DSM 4304 / JCM 9628 / NBRC 100126 / VC-16).